We begin with the raw amino-acid sequence, 308 residues long: Glucan 1,3-beta-glucosidase ARB_02797 (308 aa).

The first 20 residues, 1 to 20, serve as a signal peptide directing secretion; the sequence is MRFSTALSLALAVSPAAVFA. E120 serves as the catalytic Proton donor. N126 is a glycosylation site (N-linked (GlcNAc...) asparagine). E220 acts as the Nucleophile in catalysis.

The protein belongs to the glycosyl hydrolase 17 family.

It localises to the secreted. The protein resides in the cell wall. The protein localises to the cytoplasm. It carries out the reaction Successive hydrolysis of beta-D-glucose units from the non-reducing ends of (1-&gt;3)-beta-D-glucans, releasing alpha-glucose.. Cell wall glucan 1,3-beta-glucosidase involved in cell wall biosynthesis and virulence. Crucial for delivery of beta-1,3-glucan to the biofilm matrix and for accumulation of mature matrix biomass. This is Glucan 1,3-beta-glucosidase ARB_02797 from Arthroderma benhamiae (strain ATCC MYA-4681 / CBS 112371) (Trichophyton mentagrophytes).